The primary structure comprises 395 residues: MGFLELLEVASMPIVQVLLISVLGAFLATDYCSLLSADTRRSVNKLVFVVFTPCIMFANLAETVTLQDIISWWFMPINVGITFLVGGILGWLVVKLLNPKPQLHGLIIATCASGNMGNLMLILVPAICDEEGSPFGNRSVCRSIGLSYASFSMALGGFYIWTYSYQLVRSSATQFRALEAAGLVKSPNKDIDSDPHALLLKPHQNQDLEIQGKQKVSTRTYIKDLLHQILEELFAPPTIGAILGFVFGATNWLRNLIIGENAPLRVIQDSVKLLGEGTIPCITLILGGNLIQGLRSSAVKKSVIVGVIIVRYILLPVVGVGVVQLAGNLGYLPPDPLFRYVLMLQFALPPAMNISTMAQLFDVAQDECSVIFLWTYLVASLALTVWSTIFLSILS.

The Lumenal segment spans residues M1–E8. A helical membrane pass occupies residues V9 to T29. At D30 to K45 the chain is on the cytoplasmic side. A helical membrane pass occupies residues L46–L66. Residues Q67–W73 lie on the Lumenal side of the membrane. The chain crosses the membrane as a helical span at residues F74–V94. Over K95–L106 the chain is Cytoplasmic. A helical membrane pass occupies residues I107–I127. The Lumenal segment spans residues C128–R142. A helical membrane pass occupies residues S143–Y163. Topologically, residues S164–E232 are cytoplasmic. The chain crosses the membrane as a helical span at residues L233–L253. Residues R254–K272 lie on the Lumenal side of the membrane. Residues L273–G293 traverse the membrane as a helical segment. Residues L294–S302 lie on the Cytoplasmic side of the membrane. Residues V303–V323 traverse the membrane as a helical segment. Residues Q324 to Y340 lie on the Lumenal side of the membrane. Residues V341 to F361 traverse the membrane as a helical segment. Residues D362 to S369 are Cytoplasmic-facing. Residues V370–F390 traverse the membrane as a helical segment. Over L391–S395 the chain is Lumenal.

It belongs to the auxin efflux carrier (TC 2.A.69.2) family. Expressed in seedlings, rosette and cauline leaves, stems and flowers.

It localises to the endoplasmic reticulum membrane. Involved in cellular auxin homeostasis by regulating auxin metabolism. Regulates intracellular auxin accumulation at the endoplasmic reticulum and thus auxin availability for nuclear auxin signaling. In Arabidopsis thaliana (Mouse-ear cress), this protein is Protein PIN-LIKES 7.